The primary structure comprises 125 residues: Apoptosis inhibitor Rv3655c (125 aa).

The first 33 residues, 1–33 (MEAALAIATLVLVLVLCLAGVTAVSMQVRCIDA), serve as a signal peptide directing secretion.

In terms of assembly, interacts with human E3 ubiquitin-protein ligase RNF213.

The protein resides in the secreted. It is found in the host cytoplasm. In terms of biological role, effector protein that participates in the suppression of macrophage apoptosis by blocking the extrinsic pathway. Interferes with caspase-8 activation and binds to the host E3 ubiquitin-protein ligase RNF213, whose fusion partners have anti-apoptotic function. This is Apoptosis inhibitor Rv3655c from Mycobacterium tuberculosis (strain ATCC 25618 / H37Rv).